A 1070-amino-acid chain; its full sequence is DNA-directed RNA polymerase subunit beta (1070 aa).

The protein belongs to the RNA polymerase beta chain family. As to quaternary structure, in plastids the minimal PEP RNA polymerase catalytic core is composed of four subunits: alpha, beta, beta', and beta''. When a (nuclear-encoded) sigma factor is associated with the core the holoenzyme is formed, which can initiate transcription.

The protein resides in the plastid. The enzyme catalyses RNA(n) + a ribonucleoside 5'-triphosphate = RNA(n+1) + diphosphate. Functionally, DNA-dependent RNA polymerase catalyzes the transcription of DNA into RNA using the four ribonucleoside triphosphates as substrates. The chain is DNA-directed RNA polymerase subunit beta (rpoB) from Cuscuta reflexa (Southern Asian dodder).